Consider the following 92-residue polypeptide: Small ribosomal subunit protein uS19 (92 aa).

It belongs to the universal ribosomal protein uS19 family.

Its function is as follows. Protein S19 forms a complex with S13 that binds strongly to the 16S ribosomal RNA. The chain is Small ribosomal subunit protein uS19 from Phenylobacterium zucineum (strain HLK1).